A 313-amino-acid chain; its full sequence is Chemotaxis protein CheV2 (313 aa).

The region spanning 16–172 (EAQFLCFRLD…VEKMISDVFP (157 aa)) is the CheW-like domain. The Response regulatory domain maps to 193–313 (LILIAEDSLS…IHEMLKKTLS (121 aa)). Aspartate 246 is modified (4-aspartylphosphate).

Phosphorylated; probably by transfer of CheAY phosphate group.

Plays a role in chemotaxis signal transduction system in order to colonize the host stomach. May act as a phosphate sink to control the flow of phosphate to CheAY. The sequence is that of Chemotaxis protein CheV2 from Helicobacter pylori (strain ATCC 700392 / 26695) (Campylobacter pylori).